Here is a 440-residue protein sequence, read N- to C-terminus: Collagen alpha-1(XXVI) chain (440 aa).

The first 20 residues, 1–20 (MKLVLLLPWACCCLCGSALA), serve as a signal peptide directing secretion. An EMI domain is found at 52-128 (RRHWCHHTVT…PGFTGSNCEE (77 aa)). Intrachain disulfides connect C56/C118, C83/C89, and C117/C126. N-linked (GlcNAc...) asparagine glycosylation occurs at N70. The N-linked (GlcNAc...) asparagine glycan is linked to N132. 2 disordered regions span residues 157–362 (EQPS…EGEG) and 390–440 (LASP…GDRK). Positions 199 to 267 (GPAGPPGQMG…PGPAGSPGLL (69 aa)) constitute a Collagen-like 1 domain. 3 stretches are compositionally biased toward pro residues: residues 200–215 (PAGP…PAGP), 231–243 (VGPP…PGPR), and 252–261 (PGPPGPPGPA). Residues 269-281 (NTPQGVLYSLQTP) show a composition bias toward polar residues. One can recognise a Collagen-like 2 domain in the interval 302-334 (GIPGPRGPPGPPGPPGPHGPPGPPGAPGSQGLV). The span at 306-327 (PRGPPGPPGPPGPHGPPGPPGA) shows a compositional bias: pro residues. Residues 347 to 356 (SVKEEEDKAS) show a composition bias toward basic and acidic residues.

Homotrimer or heterotrimer. Post-translationally, hydroxylated on proline residues. N-glycosylated. As to expression, specifically expressed in the testis and ovary in adult tissues.

It is found in the secreted. Its subcellular location is the extracellular space. The protein resides in the extracellular matrix. This Mus musculus (Mouse) protein is Collagen alpha-1(XXVI) chain (Col26a1).